We begin with the raw amino-acid sequence, 198 residues long: Ribonuclease HII (198 aa).

Positions Phe3 to Pro198 constitute an RNase H type-2 domain. Residues Asp9, Glu10, and Asp104 each contribute to the a divalent metal cation site.

Belongs to the RNase HII family. Mn(2+) serves as cofactor. Mg(2+) is required as a cofactor.

It localises to the cytoplasm. The catalysed reaction is Endonucleolytic cleavage to 5'-phosphomonoester.. Its function is as follows. Endonuclease that specifically degrades the RNA of RNA-DNA hybrids. In Pyrobaculum neutrophilum (strain DSM 2338 / JCM 9278 / NBRC 100436 / V24Sta) (Thermoproteus neutrophilus), this protein is Ribonuclease HII.